The primary structure comprises 350 residues: Galactokinase (350 aa).

A substrate-binding site is contributed by 14-17 (EHTD). ATP is bound by residues serine 46 and 96 to 102 (GAGLSSS). 2 residues coordinate Mg(2+): serine 102 and glutamate 134. Aspartate 146 (proton acceptor) is an active-site residue. Tyrosine 196 serves as a coordination point for substrate.

This sequence belongs to the GHMP kinase family. GalK subfamily.

The protein localises to the cytoplasm. The catalysed reaction is alpha-D-galactose + ATP = alpha-D-galactose 1-phosphate + ADP + H(+). It functions in the pathway carbohydrate metabolism; galactose metabolism. In terms of biological role, catalyzes the transfer of the gamma-phosphate of ATP to D-galactose to form alpha-D-galactose-1-phosphate (Gal-1-P). The protein is Galactokinase of Thermotoga maritima (strain ATCC 43589 / DSM 3109 / JCM 10099 / NBRC 100826 / MSB8).